Here is a 271-residue protein sequence, read N- to C-terminus: Type III pantothenate kinase (271 aa).

5-12 (DISNSVTK) contacts ATP. Residues tyrosine 85 and 92–95 (GADR) each bind substrate. The active-site Proton acceptor is aspartate 94. K(+) is bound at residue aspartate 114. Threonine 117 lines the ATP pocket. Threonine 169 is a substrate binding site.

The protein belongs to the type III pantothenate kinase family. In terms of assembly, homodimer. NH4(+) serves as cofactor. Requires K(+) as cofactor.

Its subcellular location is the cytoplasm. It carries out the reaction (R)-pantothenate + ATP = (R)-4'-phosphopantothenate + ADP + H(+). Its pathway is cofactor biosynthesis; coenzyme A biosynthesis; CoA from (R)-pantothenate: step 1/5. Catalyzes the phosphorylation of pantothenate (Pan), the first step in CoA biosynthesis. The protein is Type III pantothenate kinase of Methylacidiphilum infernorum (isolate V4) (Methylokorus infernorum (strain V4)).